The chain runs to 191 residues: Decorin-binding protein A (191 aa).

The N-terminal stretch at 1-29 is a signal peptide; that stretch reads MIKCNNKTFNNLLKLTILVNLLISCGLTG.

It belongs to the decorin-binding protein family.

Functionally, binds to decorin which may mediate the adherence of B.burgdorferi to collagen fibers in skin and other tissues. The polypeptide is Decorin-binding protein A (dbpA) (Borreliella burgdorferi (strain ATCC 35210 / DSM 4680 / CIP 102532 / B31) (Borrelia burgdorferi)).